The following is a 309-amino-acid chain: Glutaminase (309 aa).

Residues Ser64, Asn114, Glu160, Asn167, Tyr191, Tyr243, and Val261 each contribute to the substrate site.

It belongs to the glutaminase family. As to quaternary structure, homotetramer.

It carries out the reaction L-glutamine + H2O = L-glutamate + NH4(+). This Rhodopseudomonas palustris (strain BisB18) protein is Glutaminase.